Consider the following 94-residue polypeptide: Dynein light chain, cytoplasmic (94 aa).

This sequence belongs to the dynein light chain family. Homodimer. Cytoplasmic dynein consists of two catalytic heavy chains (HCs) and a number of non-catalytic subunits which present intermediate chains (ICs), light intermediate chains (LICs) and light chains (LCs). Component of the nuclear pore complex (NPC). The nuclear pore complex constitutes the exclusive means of nucleocytoplasmic transport. NPCs allow the passive diffusion of ions and small molecules and the active, nuclear transport receptor-mediated bidirectional transport of macromolecules such as proteins, RNAs, ribonucleoparticles (RNPs), and ribosomal subunits across the nuclear envelope. Due to its 8-fold rotational symmetry, all subunits are present with 8 copies or multiples thereof.

It is found in the cytoplasm. The protein resides in the cytoskeleton. It localises to the nucleus. Its subcellular location is the nuclear pore complex. Acts as one of several non-catalytic accessory components of the cytoplasmic dynein complex that are thought to be involved in linking dynein to cargos and to adapter proteins that regulate dynein function. Cytoplasmic dynein 1 acts as a motor for the intracellular retrograde motility of vesicles and organelles along microtubules. May play a role in changing or maintaining the spatial distribution of cytoskeletal structures. Also a component of the nuclear pore complex. In Emericella nidulans (strain FGSC A4 / ATCC 38163 / CBS 112.46 / NRRL 194 / M139) (Aspergillus nidulans), this protein is Dynein light chain, cytoplasmic (nudG).